The chain runs to 786 residues: Pheromone-regulated membrane protein 10 (786 aa).

Basic and acidic residues predominate over residues 1-28 (MADSGDKDVSKSVRFDKESIESKKRSSV). Disordered stretches follow at residues 1-65 (MADS…EDGN) and 77-103 (NGGAGLAPGLSKANSNQEKTDLEDNDN). The segment covering 29-42 (DDSASSYSSSSSGQ) has biased composition (low complexity). Transmembrane regions (helical) follow at residues 469–489 (WVCVFLYGFCSAMVTPYAFGG), 491–511 (WINLAITFFMGSCVGMMQFIL), 521–541 (VFEITASIVVSFCGRAFGSIP), 545–565 (ICFGAITQGSLALILPGYIIL), 584–604 (FYAIIYSLFLGFGITLGAALF), 620–640 (PISPWFRFLFVPAFTIGISLI), 645–665 (WTQLPAMVFISCTGYVVTYWS), 675–695 (FTAALASFVIGILGNLYSRIW), 697–717 (GLAVSAMLPAIFVQVPSGIAS), and 751–771 (FGITMIEVSIGISVGLFASTL).

This sequence belongs to the ThrE exporter (TC 2.A.79) family.

Its subcellular location is the membrane. This chain is Pheromone-regulated membrane protein 10, found in Candida glabrata (strain ATCC 2001 / BCRC 20586 / JCM 3761 / NBRC 0622 / NRRL Y-65 / CBS 138) (Yeast).